A 266-amino-acid polypeptide reads, in one-letter code: Proline-rich protein 23A (266 aa).

Over residues 1 to 18 (MGSRPRSPSAFPAPWWGQ) the composition is skewed to low complexity. Disordered stretches follow at residues 1–47 (MGSR…SLED) and 197–266 (EPCA…LFQE). Positions 227-238 (PSSPLQPLPPSP) are enriched in pro residues. The span at 255–266 (PPCKARRRLFQE) shows a compositional bias: basic residues.

The protein belongs to the PRR23 family.

This is Proline-rich protein 23A (PRR23A) from Homo sapiens (Human).